The sequence spans 127 residues: DNA-directed RNA polymerases I, II, and III subunit RPABC2 (127 aa).

Residues 1–34 (MSDNEDNFDGDDFDDVEEDEGLDDLENAEEEGQE) are compositionally biased toward acidic residues. The segment at 1–53 (MSDNEDNFDGDDFDDVEEDEGLDDLENAEEEGQENVEILPSGERPQANQKRIT) is disordered. An N-acetylserine modification is found at Ser2. Residue Ser2 is modified to Phosphoserine; by CK2.

The protein belongs to the archaeal Rpo6/eukaryotic RPB6 RNA polymerase subunit family. Component of the RNA polymerase I (Pol I), RNA polymerase II (Pol II) and RNA polymerase III (Pol III) complexes consisting of at least 13, 12 and 17 subunits, respectively. Pol I complex consists of a ten-subunit catalytic core composed of POLR1A/RPA1, POLR1B/RPA2, POLR1C/RPAC1, POLR1D/RPAC2, POLR1H/RPA12, POLR2E/RPABC1, POLR2F/RPABC2, POLR2H/RPABC3, POLR2K/RPABC4 and POLR2L/RPABC5; a mobile stalk subunit POLR1F/RPA43 protruding from the core and additional subunits homologous to general transcription factors POLR1E/RPA49 and POLR1G/RPA34. Part of Pol I pre-initiation complex (PIC), in which Pol I core assembles with RRN3 and promoter-bound UTBF and SL1/TIF-IB complex. Pol II complex contains a ten-subunit catalytic core composed of POLR2A/RPB1, POLR2B/RPB2, POLR2C/RPB3, POLR2I/RPB9, POLR2J/RPB11, POLR2E/RPABC1, POLR2F/RPABC2, POLR2H/RPABC3, POLR2K/RPABC4 and POLR2L/RPABC5 and a mobile stalk composed of two subunits POLR2D/RPB4 and POLR2G/RPB7. Part of Pol II(G) complex, in which Pol II core associates with an additional subunit POLR2M; unlike conventional Pol II, Pol II(G) functions as a transcriptional repressor. Part of TBP-based Pol II pre-initiation complex (PIC), in which Pol II core assembles with general transcription factors and other specific initiation factors including GTF2E1, GTF2E2, GTF2F1, GTF2F2, TCEA1, ERCC2, ERCC3, GTF2H2, GTF2H3, GTF2H4, GTF2H5, GTF2A1, GTF2A2, GTF2B and TBP; this large multi-subunit PIC complex mediates DNA unwinding and targets Pol II core to the transcription start site where the first phosphodiester bond forms. Pol III complex consists of a ten-subunit catalytic core composed of POLR3A/RPC1, POLR3B/RPC2, POLR1C/RPAC1, POLR1D/RPAC2, POLR3K/RPC10, POLR2E/RPABC1, POLR2F/RPABC2, POLR2H/RPABC3, POLR2K/RPABC4 and POLR2L/RPABC5; a mobile stalk composed of two subunits POLR3H/RPC8 and CRCP/RPC9, protruding from the core and functioning primarily in transcription initiation; and additional subunits homologous to general transcription factors of the RNA polymerase II machinery, POLR3C/RPC3-POLR3F/RPC6-POLR3G/RPC7 heterotrimer required for transcription initiation and POLR3D/RPC4-POLR3E/RPC5 heterodimer involved in both transcription initiation and termination.

It is found in the nucleus. It localises to the nucleolus. In terms of biological role, DNA-dependent RNA polymerase catalyzes the transcription of DNA into RNA using the four ribonucleoside triphosphates as substrates. Common component of RNA polymerases I, II, and III which synthesize ribosomal RNA precursors, mRNA precursors and many functional non-coding RNAs, and small RNAs, such as 5S rRNA and tRNAs, respectively. Pol II is the central component of the basal RNA polymerase II transcription machinery. Pols are composed of mobile elements that move relative to each other. In Pol II, POLR2F/RPABC2 is part of the clamp element and together with parts of POLR2A/RPB1 and POLR2B/RPB2 forms a pocket to which the POLR2D/RPB4-POLR2G/RPB7 subcomplex binds. The chain is DNA-directed RNA polymerases I, II, and III subunit RPABC2 from Mus musculus (Mouse).